The chain runs to 95 residues: Protein TusB (95 aa).

It belongs to the DsrH/TusB family. As to quaternary structure, heterohexamer, formed by a dimer of trimers. The hexameric TusBCD complex contains 2 copies each of TusB, TusC and TusD. The TusBCD complex interacts with TusE.

Its subcellular location is the cytoplasm. Part of a sulfur-relay system required for 2-thiolation of 5-methylaminomethyl-2-thiouridine (mnm(5)s(2)U) at tRNA wobble positions. The polypeptide is Protein TusB (Salmonella dublin (strain CT_02021853)).